The following is a 429-amino-acid chain: MKKQRNLRSMAAQAIEQVVEQGQSLSNILPPLQQKVSDKDKALLQELCFGVLRTLSQSDWLINKLMARPMTGKQRTVHYLIMVGLYQLLYTRIPPHAALAETVEGAVAIKRPQLKGLINGVLRQFQRQQDELLAEFNASDARYLHPSWLLKRLQKAYPEQWQSIVEANNQRPPMWLRVNRTHHSRDSWLALLDEAGMKGFPHADYPDAVQLETPAPVHALPGFEEGWVTVQDASAQGCMTWLAPQNGEHILDLCAAPGGKTTHILEVAPEAQVLAVDIDEQRLSRVYDNLKRLGMKATVKQGDGRYPSQWCGEQQFDRILLDAPCSATGVIRRHPDIKWLRRDRDIPELAQLQSEILDAIWSHLKSGGTLVYATCSVLPEENSLQIKAFLQRTADAELCETGTPEQPGKQNLPGAEEGDGFFYAKLIKK.

S-adenosyl-L-methionine is bound by residues 254–260 (CAAPGGK), D277, D303, and D322. The active-site Nucleophile is the C375.

The protein belongs to the class I-like SAM-binding methyltransferase superfamily. RsmB/NOP family.

The protein localises to the cytoplasm. The catalysed reaction is cytidine(967) in 16S rRNA + S-adenosyl-L-methionine = 5-methylcytidine(967) in 16S rRNA + S-adenosyl-L-homocysteine + H(+). Its function is as follows. Specifically methylates the cytosine at position 967 (m5C967) of 16S rRNA. This chain is Ribosomal RNA small subunit methyltransferase B, found in Escherichia coli O6:H1 (strain CFT073 / ATCC 700928 / UPEC).